The primary structure comprises 1058 residues: Protein HIR1 (1058 aa).

WD repeat units lie at residues Gln-15–Lys-54, Thr-82–Lys-121, Ala-142–Arg-181, Ala-184–Val-223, Pro-239–Ser-282, Asp-319–Val-364, and Met-368–Ser-409. The interval Ile-49–Gly-73 is disordered. A disordered region spans residues Ala-307–Val-327. Disordered regions lie at residues Leu-500–Thr-536, Arg-591–Arg-610, Arg-651–Lys-696, and Ser-1023–Gln-1058. Composition is skewed to polar residues over residues Glu-661–His-678 and Gly-687–Lys-696. A compositionally biased stretch (basic and acidic residues) spans His-1046–Gln-1058.

The protein belongs to the WD repeat HIR1 family.

It localises to the nucleus. In terms of biological role, required for replication-independent chromatin assembly and for the periodic repression of histone gene transcription during the cell cycle. The polypeptide is Protein HIR1 (HIR1) (Yarrowia lipolytica (strain CLIB 122 / E 150) (Yeast)).